Consider the following 154-residue polypeptide: Interleukin-2 (154 aa).

The first 20 residues, 1–20 (MYRMQLLSCIALSLALVTNS), serve as a signal peptide directing secretion. Thr-23 carries O-linked (GalNAc...) threonine glycosylation. An intrachain disulfide couples Cys-78 to Cys-126.

Belongs to the IL-2 family.

It localises to the secreted. In terms of biological role, cytokine produced by activated CD4-positive helper T-cells and to a lesser extend activated CD8-positive T-cells and natural killer (NK) cells that plays pivotal roles in the immune response and tolerance. Binds to a receptor complex composed of either the high-affinity trimeric IL-2R (IL2RA/CD25, IL2RB/CD122 and IL2RG/CD132) or the low-affinity dimeric IL-2R (IL2RB and IL2RG). Interaction with the receptor leads to oligomerization and conformation changes in the IL-2R subunits resulting in downstream signaling starting with phosphorylation of JAK1 and JAK3. In turn, JAK1 and JAK3 phosphorylate the receptor to form a docking site leading to the phosphorylation of several substrates including STAT5. This process leads to activation of several pathways including STAT, phosphoinositide-3-kinase/PI3K and mitogen-activated protein kinase/MAPK pathways. Functions as a T-cell growth factor and can increase NK-cell cytolytic activity as well. Promotes strong proliferation of activated B-cells and subsequently immunoglobulin production. Plays a pivotal role in regulating the adaptive immune system by controlling the survival and proliferation of regulatory T-cells, which are required for the maintenance of immune tolerance. Moreover, participates in the differentiation and homeostasis of effector T-cell subsets, including Th1, Th2, Th17 as well as memory CD8-positive T-cells. The protein is Interleukin-2 (IL2) of Macaca mulatta (Rhesus macaque).